We begin with the raw amino-acid sequence, 86 residues long: MAEKRKYSRKYCKYTEAKVDFIDYKDTALLKHALSERFKIMPRRLTGTSKKHQEMVEIAIKRARHVALIPYIVDRKEVVTNPFEGL.

The protein belongs to the bacterial ribosomal protein bS18 family. Part of the 30S ribosomal subunit. Forms a tight heterodimer with protein bS6.

Functionally, binds as a heterodimer with protein bS6 to the central domain of the 16S rRNA, where it helps stabilize the platform of the 30S subunit. The sequence is that of Small ribosomal subunit protein bS18 from Campylobacter lari (strain RM2100 / D67 / ATCC BAA-1060).